The primary structure comprises 33 residues: Cytochrome b6-f complex subunit 8 (33 aa).

Residues 2–22 form a helical membrane-spanning segment; it reads LFTFAWASLAAIFTFSIAMVV.

Belongs to the PetN family. In terms of assembly, the 4 large subunits of the cytochrome b6-f complex are cytochrome b6, subunit IV (17 kDa polypeptide, PetD), cytochrome f and the Rieske protein, while the 4 small subunits are PetG, PetL, PetM and PetN. The complex functions as a dimer.

The protein resides in the cellular thylakoid membrane. Its function is as follows. Component of the cytochrome b6-f complex, which mediates electron transfer between photosystem II (PSII) and photosystem I (PSI), cyclic electron flow around PSI, and state transitions. The chain is Cytochrome b6-f complex subunit 8 from Prochlorococcus marinus (strain SARG / CCMP1375 / SS120).